Here is a 135-residue protein sequence, read N- to C-terminus: Large ribosomal subunit protein mL41 (135 aa).

A mitochondrion-targeting transit peptide spans 1–13 (MGFLTAVTQGLVR).

It belongs to the mitochondrion-specific ribosomal protein mL41 family. As to quaternary structure, component of the mitochondrial ribosome large subunit (39S) which comprises a 16S rRNA and about 50 distinct proteins. Interacts with BCL2.

The protein resides in the mitochondrion. In terms of biological role, component of the mitochondrial ribosome large subunit. Also involved in apoptosis and cell cycle. Enhances p53/TP53 stability, thereby contributing to p53/TP53-induced apoptosis in response to growth-inhibitory condition. Enhances p53/TP53 translocation to the mitochondria. Has the ability to arrest the cell cycle at the G1 phase, possibly by stabilizing the CDKN1A and CDKN1B (p27Kip1) proteins. The sequence is that of Large ribosomal subunit protein mL41 (Mrpl41) from Mus musculus (Mouse).